The sequence spans 327 residues: L-serine dehydratase/L-threonine deaminase (327 aa).

Lys41 carries the N6-(pyridoxal phosphate)lysine modification.

It belongs to the serine/threonine dehydratase family. Homodimer. Pyridoxal 5'-phosphate is required as a cofactor.

It localises to the cytoplasm. It catalyses the reaction L-serine = pyruvate + NH4(+). The enzyme catalyses L-threonine = 2-oxobutanoate + NH4(+). It participates in carbohydrate biosynthesis; gluconeogenesis. Functionally, catalyzes the pyridoxal-phosphate-dependent dehydrative deamination of L-threonine and L-serine to ammonia and alpha-ketobutyrate and pyruvate, respectively. This is L-serine dehydratase/L-threonine deaminase (SDS) from Bos taurus (Bovine).